The primary structure comprises 93 residues: Long neurotoxin 2 (93 aa).

An N-terminal signal peptide occupies residues 1-21 (MKILLLTLVVVTIVCLDLAYT). Cystine bridges form between Cys24–Cys42, Cys35–Cys63, Cys48–Cys52, Cys67–Cys78, and Cys79–Cys84.

Belongs to the three-finger toxin family. Long-chain subfamily. Type II alpha-neurotoxin sub-subfamily. In terms of tissue distribution, expressed by the venom gland.

It localises to the secreted. In terms of biological role, binds with high affinity to muscular (alpha-1/CHRNA1) and neuronal (alpha-7/CHRNA7) nicotinic acetylcholine receptor (nAChR) and inhibits acetylcholine from binding to the receptor, thereby impairing neuromuscular and neuronal transmission. This chain is Long neurotoxin 2, found in Hydrophis hardwickii (Hardwick's spine-bellied seasnake).